A 74-amino-acid chain; its full sequence is Progonadoliberin-3 (74 aa).

Residues 1-15 (VRVVVLALVAQVTLS) form the signal peptide. A Pyrrolidone carboxylic acid modification is found at Gln-16. A Glycine amide modification is found at Gly-25.

This sequence belongs to the GnRH family.

The protein localises to the secreted. Its function is as follows. Stimulates the secretion of gonadotropins. This Oncorhynchus tshawytscha (Chinook salmon) protein is Progonadoliberin-3 (gnrh3).